The primary structure comprises 757 residues: Cartilage oligomeric matrix protein (757 aa).

The first 20 residues, 1-20, serve as a signal peptide directing secretion; sequence MVPDTACVLLLTLAALGASG. Positions 22 to 86 are COMP N-terminal; sequence GQSPLGSDLG…SVRTGLPSVR (65 aa). Residues 87-126 form the EGF-like 1 domain; it reads PLLHCAPGFCFPGVACIQTESGARCGPCPAGFTGNGSHCT. Intrachain disulfides connect Cys91-Cys102, Cys96-Cys111, Cys114-Cys125, Cys131-Cys142, Cys136-Cys151, Cys154-Cys178, Cys184-Cys197, Cys191-Cys206, Cys209-Cys221, Cys229-Cys243, Cys237-Cys253, Cys255-Cys266, Cys282-Cys287, Cys292-Cys312, Cys328-Cys348, Cys351-Cys371, Cys387-Cys407, Cys410-Cys430, Cys448-Cys468, Cys484-Cys504, and Cys520-Cys741. N-linked (GlcNAc...) asparagine glycosylation occurs at Asn121. Positions 127–179 constitute an EGF-like 2; calcium-binding domain; that stretch reads DVNECNAHPCFPRVRCINTSPGFRCEACPPGYSGPTHQGVGLAFAKANKQVCT. An EGF-like 3; calcium-binding domain is found at 180–222; it reads DINECETGQHNCVPNSVCINTRGSFQCGPCQPGFVGDQASGCQ. Residues 225–267 enclose the EGF-like 4 domain; that stretch reads AQRFCPDGSPSECHEHADCVLERDGSRSCVCAVGWAGNGILCG. TSP type-3 repeat units lie at residues 268–300, 301–336, 337–359, 360–395, 396–418, 419–456, 457–492, and 493–528; these read RDTD…NSGQ, EDVD…NPDQ, RNTD…NDDQ, KDTD…NSDQ, KDSD…NPDQ, ADVD…NSAQ, EDSD…NPGQ, and EDAD…EVTL. The interval 298–503 is disordered; that stretch reads SGQEDVDRDG…DADRDGVGDV (206 aa). Composition is skewed to basic and acidic residues over residues 334–346 and 352–370; these read PDQR…KWGD and RSQK…RGDA. The short motif at 367-369 is the Cell attachment site element; sequence RGD. Residues 467 to 476 show a composition bias toward acidic residues; sequence ACDDDDDNDG. A mediates cell survival and induction of the IAP family of survival proteins region spans residues 527–757; that stretch reads TLTDFRAFQT…DYETHQLRQA (231 aa). The TSP C-terminal domain occupies 532–746; the sequence is RAFQTVVLDP…LRYRCNDTIP (215 aa). N-linked (GlcNAc...) asparagine glycosylation occurs at Asn742.

This sequence belongs to the thrombospondin family. Pentamer; disulfide-linked. Exists in a more compact conformation in the presence of calcium and shows a more extended conformation in the absence of calcium. Interacts with ITGB3, ITGA5 and FN1. Binding to FN1 requires the presence of divalent cations (Ca(2+), Mg(2+) or Mn(2+)). The greatest amount of binding is seen in the presence of Mn(2+). Interacts with MATN1, MATN3, MATN4 and ACAN. Binds heparin, heparan sulfate and chondroitin sulfate. EDTA dimishes significantly its binding to ACAN and abolishes its binding to MATN3, MATN4 and chondroitin sulfate. Interacts with collagen I, II and IX, and interaction with these collagens is dependent on the presence of zinc ions. Interacts with ADAMTS12. Interacts with ITGA7. The cofactor is Ca(2+). In terms of processing, proteolytically cleaved by metalloproteases ADAMTS4 and ADAMTS1 with ADAMTS4 showing more potent activity. Abundantly expressed in the chondrocyte extracellular matrix, and is also found in bone, tendon, ligament and synovium and blood vessels. Increased amounts are produced during late stages of osteoarthritis in the area adjacent to the main defect.

The protein localises to the secreted. Its subcellular location is the extracellular space. It localises to the extracellular matrix. Functionally, plays a role in the structural integrity of cartilage via its interaction with other extracellular matrix proteins such as the collagens and fibronectin. Can mediate the interaction of chondrocytes with the cartilage extracellular matrix through interaction with cell surface integrin receptors. Could play a role in the pathogenesis of osteoarthritis. Potent suppressor of apoptosis in both primary chondrocytes and transformed cells. Suppresses apoptosis by blocking the activation of caspase-3 and by inducing the IAP family of survival proteins (BIRC3, BIRC2, BIRC5 and XIAP). Essential for maintaining a vascular smooth muscle cells (VSMCs) contractile/differentiated phenotype under physiological and pathological stimuli. Maintains this phenotype of VSMCs by interacting with ITGA7. In Homo sapiens (Human), this protein is Cartilage oligomeric matrix protein.